An 81-amino-acid chain; its full sequence is Putative membrane protein insertion efficiency factor 1 (81 aa).

It belongs to the UPF0161 family.

The protein localises to the cell membrane. In terms of biological role, could be involved in insertion of integral membrane proteins into the membrane. In Bacillus licheniformis (strain ATCC 14580 / DSM 13 / JCM 2505 / CCUG 7422 / NBRC 12200 / NCIMB 9375 / NCTC 10341 / NRRL NRS-1264 / Gibson 46), this protein is Putative membrane protein insertion efficiency factor 1.